The sequence spans 449 residues: Plasmepsin IV (449 aa).

Residues 1–37 (MALTVKEEEFSNTLIKNASAFDRLKLGNLKNLKIQKK) lie on the Cytoplasmic side of the membrane. Residues 1–121 (MALTVKEEEF…SGYAQKGYLG (121 aa)) constitute a propeptide that is removed on maturation. Residues 38-58 (LQFLYLILFVLITGVFFFFLI) form a helical; Signal-anchor for type II membrane protein membrane-spanning segment. Topologically, residues 59–449 (GNFYSHRKLY…SVGFAVAKNL (391 aa)) are lumenal. The region spanning 137–444 (FYGEGQIGTN…DYEKESVGFA (308 aa)) is the Peptidase A1 domain. The active site involves D155. Residues C168 and C173 are joined by a disulfide bond. D335 is a catalytic residue. C370 and C406 form a disulfide bridge.

It belongs to the peptidase A1 family. Component of the hemozoin formation complex (HFC) composed of falcipains FP2A and/or FP2B, plasmepsins PMII, PMIII/HAP and PMIV, heme detoxifying protein HDP and falcilysin FLN. The HFC complex is involved in hemoglobin degradation and detoxification of heme in the food vacuole during the asexual blood stage. In terms of processing, proteolytically cleaved into the soluble active mature form by cysteine proteases in the digestive vacuole of trophozoites. Proteolysis requires an acidic environment. Autoprocessing or transprocessing by other plasmepsins such as PMII may serve as an alternate activation system.

It localises to the membrane. The protein resides in the vacuole lumen. It catalyses the reaction Hydrolysis of the bonds linking certain hydrophobic residues in hemoglobin or globin. Also cleaves small molecules substrates such as Ala-Leu-Glu-Arg-Thr-Phe-|-Phe(NO2)-Ser-Phe-Pro-Thr.. With respect to regulation, inhibited by KNI derived compounds KNI-10333 and to a lesser extent KNI-10743. In terms of biological role, during the asexual blood stage, catalyzes the cleavage of denatured host hemoglobin (Hb). Digestion of host Hb is an essential step which provides the parasite with amino acids for protein synthesis, and regulates osmolarity. The sequence is that of Plasmepsin IV from Plasmodium falciparum (isolate 3D7).